Here is a 642-residue protein sequence, read N- to C-terminus: Hemagglutinin-esterase-fusion glycoprotein (642 aa).

A signal peptide is located at residue A1. The fusion domain-1 stretch occupies residues 2–27; it reads EKIKICLQKQVNSSFSLHNGFGGNLY. The Extracellular segment spans residues 2–617; it reads EKIKICLQKQ…QSDPFYWGSS (616 aa). 7 disulfide bridges follow: C7-C570, C107-C152, C127-C175, C197-C239, C216-C303, C224-C276, and C333-C339. 2 N-linked (GlcNAc...) asparagine; by host glycosylation sites follow: N13 and N48. Residues 28-138 are esterase domain-1; the sequence is ATEEKRMFEL…RKNWTDIKLN (111 aa). S58 (nucleophile) is an active-site residue. A glycan (N-linked (GlcNAc...) asparagine; by host) is linked at N131. An N-acetyl-9-O-acetylneuraminic acid binding region spans residues 138 to 297; the sequence is NFQKSIYELA…VRSSPRFLLM (160 aa). Residues 298-352 form an esterase domain-2 region; that stretch reads PERSYCFDMKEKGLVTAVQSIWGKGRKSDYAVDQACLSTPGCMLIQKQKPYIGEA. Residues D353 and H356 each act as charge relay system in the active site. The segment at 353–638 is fusion domain-2; sequence DDHHGDQEMR…AALVISGIAI (286 aa). N382 carries an N-linked (GlcNAc...) asparagine; by host glycan. A helical transmembrane segment spans residues 618 to 638; the sequence is LGLAITTPISLAALVISGIAI. The Cytoplasmic segment spans residues 639 to 642; the sequence is CRTK.

The protein belongs to the influenza type C/coronaviruses hemagglutinin-esterase family. Homotrimer of disulfide-linked HEF1-HEF2. In terms of processing, in natural infection, inactive HEF is matured into HEF1 and HEF2 outside the cell by one or more trypsin-like, arginine-specific endoprotease.

The protein localises to the virion membrane. The protein resides in the host cell membrane. It carries out the reaction N-acetyl-9-O-acetylneuraminate + H2O = N-acetylneuraminate + acetate + H(+). It catalyses the reaction N-acetyl-4-O-acetylneuraminate + H2O = N-acetylneuraminate + acetate + H(+). Functionally, binds to the N-acetyl-9-O-acetylneuraminic acid residues on the cell surface, bringing about the attachment of the virus particle to the cell. Plays a major role in the determination of host range restriction and virulence. Class I viral fusion protein. Responsible for penetration of the virus into the cell cytoplasm by mediating the fusion of the membrane of the endocytosed virus particle with the endosomal membrane. Low pH in endosomes induce an irreversible conformational change in HEF2, releasing the fusion hydrophobic peptide. Several trimers are required to form a competent fusion pore. Displays a receptor-destroying activity which is a neuraminidate-O-acetyl esterase. This activity cleaves off any receptor on the cell surface, which would otherwise prevent virions release. These cleavages prevent self-aggregation and ensure the efficient spread of the progeny virus from cell to cell. This Influenza C virus (strain C/Pig/Beijing/439/1982) protein is Hemagglutinin-esterase-fusion glycoprotein (HE).